Consider the following 420-residue polypeptide: Glutamyl-tRNA reductase (420 aa).

Substrate-binding positions include 49 to 52, S109, 114 to 116, and Q120; these read TCNR and EPQ. C50 acts as the Nucleophile in catalysis. An NADP(+)-binding site is contributed by 189-194; the sequence is GAGETI.

This sequence belongs to the glutamyl-tRNA reductase family. Homodimer.

It catalyses the reaction (S)-4-amino-5-oxopentanoate + tRNA(Glu) + NADP(+) = L-glutamyl-tRNA(Glu) + NADPH + H(+). Its pathway is porphyrin-containing compound metabolism; protoporphyrin-IX biosynthesis; 5-aminolevulinate from L-glutamyl-tRNA(Glu): step 1/2. Its function is as follows. Catalyzes the NADPH-dependent reduction of glutamyl-tRNA(Glu) to glutamate 1-semialdehyde (GSA). The protein is Glutamyl-tRNA reductase of Proteus mirabilis (strain HI4320).